The primary structure comprises 185 residues: Elongation factor P (185 aa).

It belongs to the elongation factor P family.

The protein localises to the cytoplasm. It functions in the pathway protein biosynthesis; polypeptide chain elongation. Functionally, involved in peptide bond synthesis. Stimulates efficient translation and peptide-bond synthesis on native or reconstituted 70S ribosomes in vitro. Probably functions indirectly by altering the affinity of the ribosome for aminoacyl-tRNA, thus increasing their reactivity as acceptors for peptidyl transferase. This is Elongation factor P from Tropheryma whipplei (strain TW08/27) (Whipple's bacillus).